We begin with the raw amino-acid sequence, 225 residues long: Phosphoenolpyruvate guanylyltransferase (225 aa).

Positions 150, 166, and 169 each coordinate phosphoenolpyruvate. Residues 167 to 186 (PESARGHANSGARPLNGQWP) are disordered.

This sequence belongs to the CofC family.

The enzyme catalyses phosphoenolpyruvate + GTP + H(+) = enolpyruvoyl-2-diphospho-5'-guanosine + diphosphate. The protein operates within cofactor biosynthesis; coenzyme F420 biosynthesis. Its function is as follows. Guanylyltransferase that catalyzes the activation of phosphoenolpyruvate (PEP) as enolpyruvoyl-2-diphospho-5'-guanosine, via the condensation of PEP with GTP. It is involved in the biosynthesis of coenzyme F420, a hydride carrier cofactor. This is Phosphoenolpyruvate guanylyltransferase from Rhodococcus erythropolis (strain PR4 / NBRC 100887).